Consider the following 256-residue polypeptide: Thiazole synthase (256 aa).

K96 (schiff-base intermediate with DXP) is an active-site residue. Residues G157, 183-184 (AG), and 205-206 (NT) contribute to the 1-deoxy-D-xylulose 5-phosphate site.

This sequence belongs to the ThiG family. In terms of assembly, homotetramer. Forms heterodimers with either ThiH or ThiS.

Its subcellular location is the cytoplasm. The catalysed reaction is [ThiS sulfur-carrier protein]-C-terminal-Gly-aminoethanethioate + 2-iminoacetate + 1-deoxy-D-xylulose 5-phosphate = [ThiS sulfur-carrier protein]-C-terminal Gly-Gly + 2-[(2R,5Z)-2-carboxy-4-methylthiazol-5(2H)-ylidene]ethyl phosphate + 2 H2O + H(+). It participates in cofactor biosynthesis; thiamine diphosphate biosynthesis. Catalyzes the rearrangement of 1-deoxy-D-xylulose 5-phosphate (DXP) to produce the thiazole phosphate moiety of thiamine. Sulfur is provided by the thiocarboxylate moiety of the carrier protein ThiS. In vitro, sulfur can be provided by H(2)S. This Bacillus cereus (strain 03BB102) protein is Thiazole synthase.